Consider the following 242-residue polypeptide: 1-(5-phosphoribosyl)-5-[(5-phosphoribosylamino)methylideneamino] imidazole-4-carboxamide isomerase (242 aa).

The active-site Proton acceptor is Asp-10. Asp-132 serves as the catalytic Proton donor.

The protein belongs to the HisA/HisF family.

It localises to the cytoplasm. The enzyme catalyses 1-(5-phospho-beta-D-ribosyl)-5-[(5-phospho-beta-D-ribosylamino)methylideneamino]imidazole-4-carboxamide = 5-[(5-phospho-1-deoxy-D-ribulos-1-ylimino)methylamino]-1-(5-phospho-beta-D-ribosyl)imidazole-4-carboxamide. It participates in amino-acid biosynthesis; L-histidine biosynthesis; L-histidine from 5-phospho-alpha-D-ribose 1-diphosphate: step 4/9. The protein is 1-(5-phosphoribosyl)-5-[(5-phosphoribosylamino)methylideneamino] imidazole-4-carboxamide isomerase of Methanothrix thermoacetophila (strain DSM 6194 / JCM 14653 / NBRC 101360 / PT) (Methanosaeta thermophila).